The sequence spans 363 residues: Phosphoserine aminotransferase (363 aa).

Position 42 (Arg42) interacts with L-glutamate. Residues 76 to 77, Trp101, Thr151, Asp170, and Gln193 contribute to the pyridoxal 5'-phosphate site; that span reads AS. At Lys194 the chain carries N6-(pyridoxal phosphate)lysine. 234–235 contacts pyridoxal 5'-phosphate; that stretch reads NT.

This sequence belongs to the class-V pyridoxal-phosphate-dependent aminotransferase family. SerC subfamily. In terms of assembly, homodimer. Pyridoxal 5'-phosphate is required as a cofactor.

It is found in the cytoplasm. The catalysed reaction is O-phospho-L-serine + 2-oxoglutarate = 3-phosphooxypyruvate + L-glutamate. It carries out the reaction 4-(phosphooxy)-L-threonine + 2-oxoglutarate = (R)-3-hydroxy-2-oxo-4-phosphooxybutanoate + L-glutamate. It participates in amino-acid biosynthesis; L-serine biosynthesis; L-serine from 3-phospho-D-glycerate: step 2/3. Functionally, catalyzes the reversible conversion of 3-phosphohydroxypyruvate to phosphoserine and of 3-hydroxy-2-oxo-4-phosphonooxybutanoate to phosphohydroxythreonine. This chain is Phosphoserine aminotransferase, found in Listeria innocua serovar 6a (strain ATCC BAA-680 / CLIP 11262).